The primary structure comprises 469 residues: Aryl-phospho-beta-D-glucosidase BglH (469 aa).

Glu175 acts as the Proton donor in catalysis. Glu368 functions as the Nucleophile in the catalytic mechanism.

This sequence belongs to the glycosyl hydrolase 1 family.

It catalyses the reaction 6-phospho-beta-D-glucosyl-(1-&gt;4)-D-glucose + H2O = D-glucose 6-phosphate + D-glucose. In terms of biological role, catalyzes the hydrolysis of aryl-phospho-beta-D-glucosides such as 4-methylumbelliferyl-phospho-beta-D-glucopyranoside (MUG-P), phosphoarbutin and phosphosalicin. Plays a major role in the utilization of arbutin or salicin as the sole carbon source. BglA and BglH are the major proteins contributing to hydrolysis of MUG-P by extracts of late-exponential-phase or stationary-phase B.subtilis cells. The sequence is that of Aryl-phospho-beta-D-glucosidase BglH (bglH) from Bacillus subtilis (strain 168).